We begin with the raw amino-acid sequence, 583 residues long: Estrogen receptor (583 aa).

A modulating region spans residues 1–138 (MYPEESRGSG…GFEITKNTRF (138 aa)). 2 NR C4-type zinc fingers span residues 139–159 (CAVCSDYASGYHYGVWSCEGC) and 175–199 (CPATNQCTIDKNRRKSCQACRLRKC). The nuclear receptor DNA-binding region spans 139 to 204 (CAVCSDYASG…RLRKCYEVGM (66 aa)). The interval 205–265 (MKGGMRKDRG…PGGRSSLNNM (61 aa)) is hinge. The interval 220–263 (EKHGPAQRQTSQNLPTHKASPQDGRKRAMSSSSTSGPGGRSSLN) is disordered. The 236-residue stretch at 266 to 501 (PPDQVLLLLQ…DLLLEMLDAH (236 aa)) folds into the NR LBD domain. Residues 506–583 (PVKPSQSWSQ…GSHSDCTRIP (78 aa)) form a disordered region. The segment covering 539 to 551 (ASSAGSSSGPQGS) has biased composition (low complexity).

It belongs to the nuclear hormone receptor family. NR3 subfamily. As to quaternary structure, binds DNA as a homodimer. Can form a heterodimer with ER-beta.

Its subcellular location is the nucleus. Functionally, the steroid hormones and their receptors are involved in the regulation of eukaryotic gene expression and affect cellular proliferation and differentiation in target tissues. In Oreochromis aureus (Israeli tilapia), this protein is Estrogen receptor (esr1).